The sequence spans 466 residues: ATP synthase subunit beta (466 aa).

Position 155 to 162 (155 to 162 (GGAGVGKT)) interacts with ATP.

The protein belongs to the ATPase alpha/beta chains family. F-type ATPases have 2 components, CF(1) - the catalytic core - and CF(0) - the membrane proton channel. CF(1) has five subunits: alpha(3), beta(3), gamma(1), delta(1), epsilon(1). CF(0) has three main subunits: a(1), b(2) and c(9-12). The alpha and beta chains form an alternating ring which encloses part of the gamma chain. CF(1) is attached to CF(0) by a central stalk formed by the gamma and epsilon chains, while a peripheral stalk is formed by the delta and b chains.

The protein resides in the cell inner membrane. The enzyme catalyses ATP + H2O + 4 H(+)(in) = ADP + phosphate + 5 H(+)(out). Produces ATP from ADP in the presence of a proton gradient across the membrane. The catalytic sites are hosted primarily by the beta subunits. This chain is ATP synthase subunit beta, found in Bordetella pertussis (strain Tohama I / ATCC BAA-589 / NCTC 13251).